The sequence spans 415 residues: UDP-galactose transporter homolog 1 (415 aa).

Positions 1-39 are disordered; that stretch reads MHLVPEGSESMSTQQNGSAQKPVTLNGSASTKGQAPEAP. The segment covering 9 to 33 has biased composition (polar residues); the sequence is ESMSTQQNGSAQKPVTLNGSASTKG. 2 N-linked (GlcNAc...) asparagine glycosylation sites follow: N16 and N26. A run of 5 helical transmembrane segments spans residues 45–65, 95–115, 132–152, 161–181, and 185–205; these read LIQL…WGVL, IVLN…YLYF, ILFP…FGYA, TFIL…LTIF, and YPLY…TFTL. N-linked (GlcNAc...) asparagine glycosylation is present at N221. Residues 223–243 traverse the membrane as a helical segment; that stretch reads SGSSLYGIFLLSINLLLDGLT. N-linked (GlcNAc...) asparagine glycosylation is present at N244. The next 3 membrane-spanning stretches (helical) occupy residues 281–301, 325–345, and 368–388; these read LLVM…PIPI, NVLG…YTLS, and VFWF…LVFG.

Belongs to the nucleotide-sugar transporter family. SLC35B subfamily.

The protein resides in the endoplasmic reticulum membrane. May be involved in specific transport of UDP-Gal from the cytosol to the Golgi lumen. Involved in the maintenance of optimal conditions for the folding of secretory pathway proteins in the endoplasmic reticulum. This is UDP-galactose transporter homolog 1 (hut1) from Aspergillus fumigatus (strain ATCC MYA-4609 / CBS 101355 / FGSC A1100 / Af293) (Neosartorya fumigata).